Consider the following 407-residue polypeptide: Phosphopentomutase (407 aa).

Residues Asp10, Asp306, His311, Asp347, His348, and His359 each coordinate Mn(2+).

It belongs to the phosphopentomutase family. Requires Mn(2+) as cofactor.

The protein resides in the cytoplasm. The enzyme catalyses 2-deoxy-alpha-D-ribose 1-phosphate = 2-deoxy-D-ribose 5-phosphate. It carries out the reaction alpha-D-ribose 1-phosphate = D-ribose 5-phosphate. The protein operates within carbohydrate degradation; 2-deoxy-D-ribose 1-phosphate degradation; D-glyceraldehyde 3-phosphate and acetaldehyde from 2-deoxy-alpha-D-ribose 1-phosphate: step 1/2. Its function is as follows. Isomerase that catalyzes the conversion of deoxy-ribose 1-phosphate (dRib-1-P) and ribose 1-phosphate (Rib-1-P) to deoxy-ribose 5-phosphate (dRib-5-P) and ribose 5-phosphate (Rib-5-P), respectively. In Buchnera aphidicola subsp. Acyrthosiphon pisum (strain APS) (Acyrthosiphon pisum symbiotic bacterium), this protein is Phosphopentomutase.